Here is a 224-residue protein sequence, read N- to C-terminus: PKHD-type hydroxylase HNE_1625 (224 aa).

The region spanning 77–175 (KFAPPLISCS…RFVFVGWIQS (99 aa)) is the Fe2OG dioxygenase domain. Fe cation contacts are provided by His95, Asp97, and His156. Arg166 is a 2-oxoglutarate binding site.

Requires Fe(2+) as cofactor. It depends on L-ascorbate as a cofactor.

This is PKHD-type hydroxylase HNE_1625 from Hyphomonas neptunium (strain ATCC 15444).